The primary structure comprises 368 residues: MKNKFDTLTVETGVKSKKKYPIYIGKAILNLLDKVIPRNVSVLIVIDSRIARLHRDKITRLIEFLTESRTVNQIIIPGEEDSKSLSVSESLYEKAASLNLDRSSWFIGIGGGVVGDLTGFVAATYMRGANLLHVPTTLLAQVDSSVGGKVAINQSGYKNLVGNFYQPKAVIIDTNFLDTLPIRELRAGLAEVFKYGILCDRELFLTVKSLFEDCEPLNNVSWERYSYLIHKSCEIKADIVSQDEIDTGIRMLLNLGHTFAHALEGATSYNYFKHGEAVMWGLAMSAELSYKLNKLTYKDYQAIAELPELTKVPEVPIQVKDPNIIEELLLRDKKKTGEELTVILPTSIGSAEICKCPATALIKVILES.

NAD(+) contacts are provided by residues 112 to 116 (GVVGD), 136 to 137 (TT), K149, K158, and 176 to 179 (FLDT). E191, H257, and H274 together coordinate Zn(2+).

The protein belongs to the sugar phosphate cyclases superfamily. Dehydroquinate synthase family. The cofactor is Co(2+). It depends on Zn(2+) as a cofactor. Requires NAD(+) as cofactor.

It is found in the cytoplasm. The catalysed reaction is 7-phospho-2-dehydro-3-deoxy-D-arabino-heptonate = 3-dehydroquinate + phosphate. It functions in the pathway metabolic intermediate biosynthesis; chorismate biosynthesis; chorismate from D-erythrose 4-phosphate and phosphoenolpyruvate: step 2/7. In terms of biological role, catalyzes the conversion of 3-deoxy-D-arabino-heptulosonate 7-phosphate (DAHP) to dehydroquinate (DHQ). In Natranaerobius thermophilus (strain ATCC BAA-1301 / DSM 18059 / JW/NM-WN-LF), this protein is 3-dehydroquinate synthase.